A 227-amino-acid polypeptide reads, in one-letter code: Protein Saci_0792 (227 aa).

The AMMECR1 domain occupies 15 to 209 (DIGKQLIKIA…EINKNTDEII (195 aa)).

The protein is Protein Saci_0792 of Sulfolobus acidocaldarius (strain ATCC 33909 / DSM 639 / JCM 8929 / NBRC 15157 / NCIMB 11770).